The primary structure comprises 211 residues: Histidine biosynthesis bifunctional protein HisIE (211 aa).

Residues 1-117 (MSTQTNTKSD…CWLDGNAHPF (117 aa)) are phosphoribosyl-AMP cyclohydrolase. The phosphoribosyl-ATP pyrophosphohydrolase stretch occupies residues 118–211 (LNNLAELIAS…LARHQKAQRK (94 aa)).

In the N-terminal section; belongs to the PRA-CH family. This sequence in the C-terminal section; belongs to the PRA-PH family.

It localises to the cytoplasm. It catalyses the reaction 1-(5-phospho-beta-D-ribosyl)-ATP + H2O = 1-(5-phospho-beta-D-ribosyl)-5'-AMP + diphosphate + H(+). The enzyme catalyses 1-(5-phospho-beta-D-ribosyl)-5'-AMP + H2O = 1-(5-phospho-beta-D-ribosyl)-5-[(5-phospho-beta-D-ribosylamino)methylideneamino]imidazole-4-carboxamide. The protein operates within amino-acid biosynthesis; L-histidine biosynthesis; L-histidine from 5-phospho-alpha-D-ribose 1-diphosphate: step 2/9. Its pathway is amino-acid biosynthesis; L-histidine biosynthesis; L-histidine from 5-phospho-alpha-D-ribose 1-diphosphate: step 3/9. The chain is Histidine biosynthesis bifunctional protein HisIE from Shewanella oneidensis (strain ATCC 700550 / JCM 31522 / CIP 106686 / LMG 19005 / NCIMB 14063 / MR-1).